Consider the following 534-residue polypeptide: Anther-specific proline-rich protein APG (534 aa).

Positions 1-35 (MKRSSLVDSCSYSRIFRSIFCLLSFCIFFLTTTNA) are cleaved as a signal peptide. Over residues 59–196 (NPPTPDPSPK…SPKPAPSPPK (138 aa)) the composition is skewed to pro residues. Positions 59–202 (NPPTPDPSPK…SPPKPENKTI (144 aa)) are disordered. Residue S211 is the Nucleophile of the active site. Catalysis depends on residues D508 and H511.

It belongs to the 'GDSL' lipolytic enzyme family. In terms of tissue distribution, found in sporophytic and gametophytic cell types in the anther, only in male fertile plants.

This Arabidopsis thaliana (Mouse-ear cress) protein is Anther-specific proline-rich protein APG (APG).